The chain runs to 347 residues: UPF0284 protein M164_0030 (347 aa).

It belongs to the UPF0284 family.

This Saccharolobus islandicus (strain M.16.4 / Kamchatka #3) (Sulfolobus islandicus) protein is UPF0284 protein M164_0030.